Here is an 831-residue protein sequence, read N- to C-terminus: Zinc phosphodiesterase ELAC protein 2 (831 aa).

A mitochondrion-targeting transit peptide spans 1–16; sequence MWALRSLLRPLGLRTM. Disordered regions lie at residues 15 to 47 and 179 to 227; these read TMSQGSARRPRPSKDPLRHLRTREKRGPGPGGP and SERR…ANRK. Over residues 186–212 the composition is skewed to polar residues; it reads QQPSQSPRTSPNRLSPKQSSDSGSAEN. 5 positions are modified to phosphoserine: serine 191, serine 195, serine 200, serine 204, and serine 732. Positions 791 to 831 are disordered; it reads LTQQADSPEDREPQQKRAHTDEPHSPQSKKESVANTLGARV. Phosphothreonine is present on threonine 792. Phosphoserine is present on residues serine 797 and serine 815. Residues 798-822 show a composition bias toward basic and acidic residues; sequence PEDREPQQKRAHTDEPHSPQSKKES.

This sequence belongs to the RNase Z family. As to quaternary structure, homodimer. Interacts with PTCD1. Zn(2+) is required as a cofactor.

The protein localises to the mitochondrion. Its subcellular location is the mitochondrion matrix. It localises to the mitochondrion nucleoid. The protein resides in the nucleus. The enzyme catalyses Endonucleolytic cleavage of RNA, removing extra 3' nucleotides from tRNA precursor, generating 3' termini of tRNAs. A 3'-hydroxy group is left at the tRNA terminus and a 5'-phosphoryl group is left at the trailer molecule.. Its function is as follows. Zinc phosphodiesterase, which displays mitochondrial tRNA 3'-processing endonuclease activity. Involved in tRNA maturation, by removing a 3'-trailer from precursor tRNA. Associates with mitochondrial DNA complexes at the nucleoids to initiate RNA processing and ribosome assembly. The polypeptide is Zinc phosphodiesterase ELAC protein 2 (Elac2) (Mus musculus (Mouse)).